A 492-amino-acid polypeptide reads, in one-letter code: Catalase (492 aa).

Residues histidine 65 and asparagine 138 contribute to the active site. Tyrosine 348 is a binding site for heme.

The protein belongs to the catalase family. As to quaternary structure, homotetramer. It depends on heme as a cofactor.

It is found in the cytoplasm. Its subcellular location is the cytosol. It localises to the peroxisome matrix. It carries out the reaction 2 H2O2 = O2 + 2 H2O. Functionally, catalyzes the degradation of hydrogen peroxide (H(2)O(2)) generated by peroxisomal oxidases to water and oxygen, thereby protecting cells from the toxic effects of hydrogen peroxide. This Ipomoea batatas (Sweet potato) protein is Catalase.